A 626-amino-acid chain; its full sequence is Chaperone protein HtpG (626 aa).

The tract at residues 1 to 341 is a; substrate-binding; sequence METKQFKAES…SEDLSLNISR (341 aa). Residues 342 to 552 are b; the sequence is EILQHDRQLK…EGELSIEMEK (211 aa). The disordered stretch occupies residues 490–509; it reads DLGIEGEEKENTSSSDDKEN. Residues 498–509 show a composition bias toward basic and acidic residues; it reads KENTSSSDDKEN. The tract at residues 553 to 626 is c; it reads VLNAMPNNQN…FTNNICKIMK (74 aa).

The protein belongs to the heat shock protein 90 family. As to quaternary structure, homodimer.

The protein resides in the cytoplasm. Its function is as follows. Molecular chaperone. Has ATPase activity. The polypeptide is Chaperone protein HtpG (Clostridium botulinum (strain Okra / Type B1)).